The following is a 91-amino-acid chain: Tityustoxin-19 (91 aa).

A signal peptide spans 1–25 (MVATNRCCVFALLFALLLVHSLTEA). The BetaSPN-type CS-alpha/beta domain occupies 58 to 91 (EYACPAIDKFCEDHCAAKKAVGKCDDFKCNCIKL). 3 disulfides stabilise this stretch: Cys61/Cys81, Cys68/Cys86, and Cys72/Cys88.

It belongs to the long chain scorpion toxin family. Class 2 subfamily. Expressed by the venom gland.

The protein localises to the secreted. Its function is as follows. May function as a voltage-gated potassium channel blocker and may have cytolytic activity. Is often not detected in the tested venom fractions, suggesting that the toxin is likely subject to frequent processing within the venom. Functionally, specific and reversible blocker of the potassium channel Kv1.2/KCNA2 (IC(50)=544 nM). In terms of biological role, shows cytolytic effects on erythrocytes and induces non-selective pore formation when high concentrations (300 nM) are applied on oocytes. Does not cause hemolysis, mast cell degranulation, LDH release, and does not have antimicrobial activity. Does not cause edema and pain. This Tityus serrulatus (Brazilian scorpion) protein is Tityustoxin-19.